Consider the following 45-residue polypeptide: Photosystem II reaction center protein K (45 aa).

A propeptide spanning residues 1 to 8 (MEGILFLA) is cleaved from the precursor. Residues 24–44 (APVIPVFFLLLAFVWQAAVGF) form a helical membrane-spanning segment.

This sequence belongs to the PsbK family. PSII is composed of 1 copy each of membrane proteins PsbA, PsbB, PsbC, PsbD, PsbE, PsbF, PsbH, PsbI, PsbJ, PsbK, PsbL, PsbM, PsbT, PsbX, PsbY, PsbZ, Psb30/Ycf12, at least 3 peripheral proteins of the oxygen-evolving complex and a large number of cofactors. It forms dimeric complexes.

It localises to the plastid. It is found in the chloroplast thylakoid membrane. Its function is as follows. One of the components of the core complex of photosystem II (PSII). PSII is a light-driven water:plastoquinone oxidoreductase that uses light energy to abstract electrons from H(2)O, generating O(2) and a proton gradient subsequently used for ATP formation. It consists of a core antenna complex that captures photons, and an electron transfer chain that converts photonic excitation into a charge separation. The sequence is that of Photosystem II reaction center protein K from Guillardia theta (Cryptophyte).